The primary structure comprises 622 residues: Kelch-like protein 14 (622 aa).

The region spanning 33–145 (CDVTLTAQGQ…LYTANVTLSL (113 aa)) is the BTB domain. The segment at 73–108 (ALGPGAQDGLGGAPPKEPPPPPQEEPGTPSSSPEDK) is disordered. The span at 87–96 (PKEPPPPPQE) shows a compositional bias: pro residues. Kelch repeat units lie at residues 317 to 366 (MLLL…EVEN), 367 to 418 (FLFV…RLDK), 419 to 465 (NLYV…VHNG), 467 to 512 (IYIS…VMND), 514 to 564 (LYAI…VLDD), and 566 to 614 (IYLV…TVIL).

It is found in the cytoplasm. The protein resides in the cytosol. The protein localises to the endoplasmic reticulum membrane. The chain is Kelch-like protein 14 (KLHL14) from Gallus gallus (Chicken).